Reading from the N-terminus, the 716-residue chain is 1,4-alpha-glucan branching enzyme GlgB (716 aa).

D398 functions as the Nucleophile in the catalytic mechanism. Residue E451 is the Proton donor of the active site.

Belongs to the glycosyl hydrolase 13 family. GlgB subfamily. In terms of assembly, monomer.

It carries out the reaction Transfers a segment of a (1-&gt;4)-alpha-D-glucan chain to a primary hydroxy group in a similar glucan chain.. Its pathway is glycan biosynthesis; glycogen biosynthesis. Its function is as follows. Catalyzes the formation of the alpha-1,6-glucosidic linkages in glycogen by scission of a 1,4-alpha-linked oligosaccharide from growing alpha-1,4-glucan chains and the subsequent attachment of the oligosaccharide to the alpha-1,6 position. In Nitrobacter hamburgensis (strain DSM 10229 / NCIMB 13809 / X14), this protein is 1,4-alpha-glucan branching enzyme GlgB.